The primary structure comprises 176 residues: Ribosome maturation factor RimM (176 aa).

Positions glutamate 104–isoleucine 176 constitute a PRC barrel domain.

This sequence belongs to the RimM family. Binds ribosomal protein uS19.

It localises to the cytoplasm. An accessory protein needed during the final step in the assembly of 30S ribosomal subunit, possibly for assembly of the head region. Essential for efficient processing of 16S rRNA. May be needed both before and after RbfA during the maturation of 16S rRNA. It has affinity for free ribosomal 30S subunits but not for 70S ribosomes. The polypeptide is Ribosome maturation factor RimM (Thermotoga maritima (strain ATCC 43589 / DSM 3109 / JCM 10099 / NBRC 100826 / MSB8)).